We begin with the raw amino-acid sequence, 185 residues long: uncharacterized protein (185 aa).

The N-acetyltransferase domain maps to Val9 to Leu169.

This is an uncharacterized protein from Bacillus subtilis (strain 168).